A 1536-amino-acid chain; its full sequence is Alpha-2-macroglobulin (1536 aa).

A signal peptide spans 1–23 (MGMKRLIFLVFLLISFSLFGGYA). A cross-link (isoglutamyl cysteine thioester (Cys-Gln)) is located at residues 919-922 (CVEQ).

The protein belongs to the protease inhibitor I39 (alpha-2-macroglobulin) family. Bacterial alpha-2-macroglobulin subfamily.

Its function is as follows. Protects the bacterial cell from peptidases. This Thermotoga maritima (strain ATCC 43589 / DSM 3109 / JCM 10099 / NBRC 100826 / MSB8) protein is Alpha-2-macroglobulin.